The chain runs to 689 residues: ATP-dependent zinc metalloprotease FtsH 2 (689 aa).

Topologically, residues 1–3 (MRK) are cytoplasmic. Residues 4–24 (FFRGASFYILAFIIILFIVQN) traverse the membrane as a helical segment. Over 25 to 111 (FGRPTQEIDE…SAAPPPTTPW (87 aa)) the chain is Extracellular. Residues 112–132 (FIELLPSIFMVLIFIVFWFVF) form a helical membrane-spanning segment. Residues 133-689 (MQQSQGGGNR…QDNEENRKEE (557 aa)) are Cytoplasmic-facing. ATP is bound at residue 205–212 (GPPGTGKT). His-427 provides a ligand contact to Zn(2+). Residue Glu-428 is part of the active site. Zn(2+) contacts are provided by His-431 and Asp-503. The segment covering 661-673 (EELIEVSSDKEEE) has biased composition (basic and acidic residues). Residues 661–689 (EELIEVSSDKEEEKDNQDDQDNEENRKEE) form a disordered region.

It in the central section; belongs to the AAA ATPase family. This sequence in the C-terminal section; belongs to the peptidase M41 family. As to quaternary structure, homohexamer. The cofactor is Zn(2+).

Its subcellular location is the cell membrane. In terms of biological role, acts as a processive, ATP-dependent zinc metallopeptidase for both cytoplasmic and membrane proteins. Plays a role in the quality control of integral membrane proteins. In Alkaliphilus metalliredigens (strain QYMF), this protein is ATP-dependent zinc metalloprotease FtsH 2.